We begin with the raw amino-acid sequence, 1285 residues long: Peroxidasin homolog pxn-1 (1285 aa).

Residues 1-20 (MNLYLLLLVIATSSWQFVAG) form the signal peptide. One can recognise an LRRNT domain in the interval 21 to 53 (LECPVECTCDKKGLVVDCSSSGLTRIPKNISRN). LRR repeat units follow at residues 27-49 (CTCDKKGLVVDCSSSGLTRIPKN), 50-72 (ISRNVRSLVIRNNRIHKLKRSDL), 73-96 (EGFNQLETLVLTHNKIKIIEENVL), 97-120 (DHLPELKRLSLAHNELVYIPPLCS), 122-143 (SRPLASLNLKRNHIQFIDEQVL), 145-168 (YFPDLTQLDFSHNRIQSLRTKLFD), and 204-227 (KVYCTNPVELRHQALDEVDDSALT). Asn49 is a glycosylation site (N-linked (GlcNAc...) asparagine). The region spanning 180 to 228 (SNPWHCDCRASKVKALLQKVKWEKKVYCTNPVELRHQALDEVDDSALTC) is the LRRCT domain. N-linked (GlcNAc...) asparagine glycosylation occurs at Asn248. Residues 305–324 (RQSQHQGNGSPQFTYKPRDN) form a disordered region. Residues 307-317 (SQHQGNGSPQF) are compositionally biased toward polar residues. 2 consecutive Ig-like C2-type domains span residues 315-401 (PQFT…FSLD) and 408-495 (PNIY…AKLT). Intrachain disulfides connect Cys336/Cys385 and Cys429/Cys479. Residues 508-550 (QIDEELLRAIAQKARQNVENAVEKTRKQLTQDKVTNTNDLKRL) are a coiled coil. Asn595 carries N-linked (GlcNAc...) asparagine glycosylation. Residues Cys625 and Cys641 are joined by a disulfide bond. Residue Asp719 participates in heme b binding. His720 serves as the catalytic Proton acceptor. Asp721 is a Ca(2+) binding site. Cystine bridges form between Cys740–Cys750 and Cys744–Cys771. A glycan (N-linked (GlcNAc...) asparagine) is linked at Asn741. Positions 803, 805, 807, and 809 each coordinate Ca(2+). N-linked (GlcNAc...) asparagine glycosylation is present at Asn858. Residues Glu877 and His973 each coordinate heme b. LRR repeat units lie at residues 998–1022 (HKAFFTPELVLTQGGVDPLLRGLFA) and 1049–1073 (VSLDLAVMNIQRSRDHGLPSYTEYR). 2 disulfides stabilise this stretch: Cys1076–Cys1133 and Cys1174–Cys1201. One copy of the LRR 12 repeat lies at 1168 to 1189 (TLARLFCDNGDNIDRIQKDVFM).

Belongs to the peroxidase family. XPO subfamily. Ca(2+) is required as a cofactor. Heme b serves as cofactor. Expressed in the ventral nerve cord, the dorsal nerve cord, head neurons, GABAergic and cholinergic neurons, body wall muscles, vulval muscles, uterine muscles, intestine, the hypodermis and in coelomocytes.

Its subcellular location is the secreted. The protein localises to the extracellular space. It is found in the extracellular matrix. It carries out the reaction L-lysyl-[collagen] + L-methionyl-[collagen] + H2O2 = [collagen]-L-lysyl-N-S-L-methionyl-[collagen] + 2 H2O + H(+). It catalyses the reaction bromide + H2O2 = hypobromite + H2O. The catalysed reaction is L-lysyl-[collagen] + L-methionyl-[collagen] + hypobromite = [collagen]-L-lysyl-N-S-L-methionyl-[collagen] + bromide + H2O + H(+). The enzyme catalyses L-tyrosyl-[protein] + bromide + H2O2 + H(+) = 3-bromo-L-tyrosyl-[protein] + 2 H2O. It carries out the reaction hypobromite + L-tyrosyl-[protein] + H(+) = 3-bromo-L-tyrosyl-[protein] + H2O. Functionally, catalyzes the two-electron oxidation of bromide by hydrogen peroxide and generates hypobromite as a reactive intermediate which mediates the formation of sulfilimine cross-links between methionine and hydroxylysine residues within an uncross-linked collagen IV NC1 hexamer. Plays a role in the attachment of tissues and in axonal guidance during early developmental stages. May functionally antagonize the peroxidasin pxn-2 to maintain neuronal development. This chain is Peroxidasin homolog pxn-1, found in Caenorhabditis elegans.